The primary structure comprises 128 residues: Large ribosomal subunit protein bL17 (128 aa).

This sequence belongs to the bacterial ribosomal protein bL17 family. In terms of assembly, part of the 50S ribosomal subunit. Contacts protein L32.

This chain is Large ribosomal subunit protein bL17, found in Pseudomonas fluorescens (strain Pf0-1).